We begin with the raw amino-acid sequence, 413 residues long: DNA primase DnaG (413 aa).

One can recognise a Toprim domain in the interval 168–246; sequence PNLIIVEGRA…KIDYVARAPV (79 aa). Mg(2+)-binding residues include Glu174, Asp219, and Asp221.

Belongs to the archaeal DnaG primase family. In terms of assembly, forms a ternary complex with MCM helicase and DNA. Component of the archaeal exosome complex. Mg(2+) is required as a cofactor.

The catalysed reaction is ssDNA + n NTP = ssDNA/pppN(pN)n-1 hybrid + (n-1) diphosphate.. Its function is as follows. RNA polymerase that catalyzes the synthesis of short RNA molecules used as primers for DNA polymerase during DNA replication. Also part of the exosome, which is a complex involved in RNA degradation. Acts as a poly(A)-binding protein that enhances the interaction between heteromeric, adenine-rich transcripts and the exosome. This is DNA primase DnaG from Metallosphaera sedula (strain ATCC 51363 / DSM 5348 / JCM 9185 / NBRC 15509 / TH2).